A 71-amino-acid polypeptide reads, in one-letter code: Conotoxin Tx11.3 (71 aa).

An N-terminal signal peptide occupies residues 1–19 (MKLCVTFLLVLVILPSVTG). A propeptide spanning residues 20–47 (VKSSERTLSGAALRGDRGTCSGRGQECK) is cleaved from the precursor. Disulfide bonds link Cys-39–Cys-53, Cys-46–Cys-58, Cys-52–Cys-63, and Cys-57–Cys-70.

This sequence belongs to the I1 superfamily. In terms of tissue distribution, expressed by the venom duct.

Its subcellular location is the secreted. This is Conotoxin Tx11.3 from Conus textile (Cloth-of-gold cone).